A 318-amino-acid polypeptide reads, in one-letter code: Thymidylate synthase (318 aa).

Residues Arg25 and 180-181 (RR) each bind dUMP. Cys200 acts as the Nucleophile in catalysis. DUMP-binding positions include 220–223 (RSGD), Asn231, and 261–263 (HIY). Asp223 contributes to the (6R)-5,10-methylene-5,6,7,8-tetrahydrofolate binding site. Ala317 contributes to the (6R)-5,10-methylene-5,6,7,8-tetrahydrofolate binding site.

It belongs to the thymidylate synthase family. Bacterial-type ThyA subfamily. As to quaternary structure, homodimer.

The protein resides in the cytoplasm. It carries out the reaction dUMP + (6R)-5,10-methylene-5,6,7,8-tetrahydrofolate = 7,8-dihydrofolate + dTMP. It participates in pyrimidine metabolism; dTTP biosynthesis. Its function is as follows. Catalyzes the reductive methylation of 2'-deoxyuridine-5'-monophosphate (dUMP) to 2'-deoxythymidine-5'-monophosphate (dTMP) while utilizing 5,10-methylenetetrahydrofolate (mTHF) as the methyl donor and reductant in the reaction, yielding dihydrofolate (DHF) as a by-product. This enzymatic reaction provides an intracellular de novo source of dTMP, an essential precursor for DNA biosynthesis. The sequence is that of Thymidylate synthase from Lactobacillus helveticus (strain DPC 4571).